Reading from the N-terminus, the 331-residue chain is UDP-GalNAc:beta-1,3-N-acetylgalactosaminyltransferase 1 (331 aa).

Topologically, residues 1–20 are cytoplasmic; it reads MASALWTVLPSRMSLRSLQW. A helical; Signal-anchor for type II membrane protein membrane pass occupies residues 21 to 43; that stretch reads SLLLLSLLSFLVMWYLSLPHYNV. Residues 44–331 are Lumenal-facing; it reads IERVNWMYFY…VMLRNTTCHY (288 aa). Residues Asn72, Asn154, Asn198, Asn212, and Asn326 are each glycosylated (N-linked (GlcNAc...) asparagine).

The protein belongs to the glycosyltransferase 31 family. Requires Mg(2+) as cofactor.

The protein localises to the golgi apparatus membrane. The enzyme catalyses a globoside Gb3Cer (d18:1(4E)) + UDP-N-acetyl-alpha-D-galactosamine = a globoside Gb4Cer (d18:1(4E)) + UDP + H(+). It functions in the pathway protein modification; protein glycosylation. Functionally, transfers N-acetylgalactosamine onto globotriaosylceramide. Plays a critical role in preimplantation stage embryonic development. The sequence is that of UDP-GalNAc:beta-1,3-N-acetylgalactosaminyltransferase 1 (B3GALNT1) from Pongo abelii (Sumatran orangutan).